A 207-amino-acid chain; its full sequence is Probable mediator of RNA polymerase II transcription subunit 19b (207 aa).

Residues 99–207 form a disordered region; it reads DTAPVELPPA…SSKLDEMGAM (109 aa). Positions 127 to 152 are enriched in basic residues; that stretch reads DRKHRKHKDKKEKDREHKKHKHKHKD. A compositionally biased stretch (basic and acidic residues) spans 153-167; sequence RIKDKDKDKDRDKKK. Basic residues predominate over residues 168–179; sequence EKSGHHDKKRKN.

This sequence belongs to the plant Mediator complex subunit 19 family. As to quaternary structure, component of the Mediator complex.

Its subcellular location is the nucleus. Component of the Mediator complex, a coactivator involved in the regulated transcription of nearly all RNA polymerase II-dependent genes. Mediator functions as a bridge to convey information from gene-specific regulatory proteins to the basal RNA polymerase II transcription machinery. The Mediator complex, having a compact conformation in its free form, is recruited to promoters by direct interactions with regulatory proteins and serves for the assembly of a functional preinitiation complex with RNA polymerase II and the general transcription factors. In Arabidopsis thaliana (Mouse-ear cress), this protein is Probable mediator of RNA polymerase II transcription subunit 19b (MED19B).